The primary structure comprises 258 residues: Acyl-[acyl-carrier-protein]--UDP-N-acetylglucosamine O-acyltransferase (258 aa).

Belongs to the transferase hexapeptide repeat family. LpxA subfamily. As to quaternary structure, homotrimer.

The protein localises to the cytoplasm. The enzyme catalyses a (3R)-hydroxyacyl-[ACP] + UDP-N-acetyl-alpha-D-glucosamine = a UDP-3-O-[(3R)-3-hydroxyacyl]-N-acetyl-alpha-D-glucosamine + holo-[ACP]. It participates in glycolipid biosynthesis; lipid IV(A) biosynthesis; lipid IV(A) from (3R)-3-hydroxytetradecanoyl-[acyl-carrier-protein] and UDP-N-acetyl-alpha-D-glucosamine: step 1/6. Functionally, involved in the biosynthesis of lipid A, a phosphorylated glycolipid that anchors the lipopolysaccharide to the outer membrane of the cell. The polypeptide is Acyl-[acyl-carrier-protein]--UDP-N-acetylglucosamine O-acyltransferase (Pseudomonas putida (strain ATCC 47054 / DSM 6125 / CFBP 8728 / NCIMB 11950 / KT2440)).